A 275-amino-acid chain; its full sequence is 2-C-methyl-D-erythritol 4-phosphate cytidylyltransferase (275 aa).

This sequence belongs to the IspD/TarI cytidylyltransferase family. IspD subfamily.

The enzyme catalyses 2-C-methyl-D-erythritol 4-phosphate + CTP + H(+) = 4-CDP-2-C-methyl-D-erythritol + diphosphate. Its pathway is isoprenoid biosynthesis; isopentenyl diphosphate biosynthesis via DXP pathway; isopentenyl diphosphate from 1-deoxy-D-xylulose 5-phosphate: step 2/6. In terms of biological role, catalyzes the formation of 4-diphosphocytidyl-2-C-methyl-D-erythritol from CTP and 2-C-methyl-D-erythritol 4-phosphate (MEP). This is 2-C-methyl-D-erythritol 4-phosphate cytidylyltransferase from Corynebacterium jeikeium (strain K411).